A 283-amino-acid chain; its full sequence is Phosphatidylglycerol--prolipoprotein diacylglyceryl transferase (283 aa).

Transmembrane regions (helical) follow at residues 14-34 (LGPLAVHWYGLMYLLGFALFL), 56-76 (MLMYGAVGVVVGGRLGEVLFY), and 88-108 (IFMVWKGGMSFHGGFLGVLIA). Arginine 139 contributes to the a 1,2-diacyl-sn-glycero-3-phospho-(1'-sn-glycerol) binding site. The helical transmembrane segment at 258-278 (MGQWLSLPMIVIGVALLVFFG) threads the bilayer.

The protein belongs to the Lgt family.

Its subcellular location is the cell inner membrane. It carries out the reaction L-cysteinyl-[prolipoprotein] + a 1,2-diacyl-sn-glycero-3-phospho-(1'-sn-glycerol) = an S-1,2-diacyl-sn-glyceryl-L-cysteinyl-[prolipoprotein] + sn-glycerol 1-phosphate + H(+). It participates in protein modification; lipoprotein biosynthesis (diacylglyceryl transfer). Functionally, catalyzes the transfer of the diacylglyceryl group from phosphatidylglycerol to the sulfhydryl group of the N-terminal cysteine of a prolipoprotein, the first step in the formation of mature lipoproteins. The protein is Phosphatidylglycerol--prolipoprotein diacylglyceryl transferase of Chromobacterium violaceum (strain ATCC 12472 / DSM 30191 / JCM 1249 / CCUG 213 / NBRC 12614 / NCIMB 9131 / NCTC 9757 / MK).